The primary structure comprises 137 residues: Large ribosomal subunit protein uL16 (137 aa).

Belongs to the universal ribosomal protein uL16 family. In terms of assembly, part of the 50S ribosomal subunit.

Binds 23S rRNA and is also seen to make contacts with the A and possibly P site tRNAs. The chain is Large ribosomal subunit protein uL16 from Pseudomonas fluorescens (strain Pf0-1).